A 123-amino-acid polypeptide reads, in one-letter code: Large ribosomal subunit protein bL20 (123 aa).

It belongs to the bacterial ribosomal protein bL20 family.

In terms of biological role, binds directly to 23S ribosomal RNA and is necessary for the in vitro assembly process of the 50S ribosomal subunit. It is not involved in the protein synthesizing functions of that subunit. This chain is Large ribosomal subunit protein bL20 (rplT), found in Chlamydia trachomatis serovar D (strain ATCC VR-885 / DSM 19411 / UW-3/Cx).